The following is a 259-amino-acid chain: UPF0246 protein VSAL_I2547 (259 aa).

The protein belongs to the UPF0246 family.

This chain is UPF0246 protein VSAL_I2547, found in Aliivibrio salmonicida (strain LFI1238) (Vibrio salmonicida (strain LFI1238)).